The sequence spans 158 residues: NAD(P)H-quinone oxidoreductase subunit J, chloroplastic (158 aa).

The protein belongs to the complex I 30 kDa subunit family. As to quaternary structure, NDH is composed of at least 16 different subunits, 5 of which are encoded in the nucleus.

The protein resides in the plastid. The protein localises to the chloroplast thylakoid membrane. The enzyme catalyses a plastoquinone + NADH + (n+1) H(+)(in) = a plastoquinol + NAD(+) + n H(+)(out). The catalysed reaction is a plastoquinone + NADPH + (n+1) H(+)(in) = a plastoquinol + NADP(+) + n H(+)(out). NDH shuttles electrons from NAD(P)H:plastoquinone, via FMN and iron-sulfur (Fe-S) centers, to quinones in the photosynthetic chain and possibly in a chloroplast respiratory chain. The immediate electron acceptor for the enzyme in this species is believed to be plastoquinone. Couples the redox reaction to proton translocation, and thus conserves the redox energy in a proton gradient. This Nuphar advena (Common spatterdock) protein is NAD(P)H-quinone oxidoreductase subunit J, chloroplastic.